The following is a 275-amino-acid chain: MARFALTIVRHGETRYNKEKLLQGQGIDEPLSEMGFKQADAAGRFLSNVRFTHVFSSDLIRAKQTACAIMRNNQLSEDIKIMYDPRLRERKYGDAEGRPLSELKVMAKKAGGQCPSYTPPGGETLEQVRACAKDFFEYLCQLVMAESSVKEKSELGASGMVGIMSTDLAPFVNHNKEPTIFGESRDVTLDASVLLVSHGAYMRNWIKYFVEDLQFTFPPELKKSRELSVSPNTGISHFIVTVGSGATRKPEIQCVCINLHGHLSDIDADTSHYQV.

The Tele-phosphohistidine intermediate role is filled by His11. The active-site Proton donor/acceptor is Glu89.

It belongs to the phosphoglycerate mutase family.

It is found in the cytoplasm. The protein localises to the nucleus. Its subcellular location is the mitochondrion. It carries out the reaction beta-D-fructose 2,6-bisphosphate + H2O = beta-D-fructose 6-phosphate + phosphate. Its function is as follows. Fructose-bisphosphatase hydrolyzing fructose-2,6-bisphosphate as well as fructose-1,6-bisphosphate. Acts as a negative regulator of glycolysis by lowering intracellular levels of fructose-2,6-bisphosphate in a p53/TP53-dependent manner, resulting in the pentose phosphate pathway (PPP) activation and NADPH production. Contributes to the generation of reduced glutathione to cause a decrease in intracellular reactive oxygen species (ROS) content, correlating with its ability to protect cells from oxidative or metabolic stress-induced cell death. May play a role in mitophagy inhibition. The chain is Fructose-2,6-bisphosphatase TIGAR from Xenopus laevis (African clawed frog).